A 316-amino-acid chain; its full sequence is Serpentine receptor class delta-48 (316 aa).

Helical transmembrane passes span 8–28, 42–62, 89–109, 127–147, 185–205, 236–256, and 269–289; these read FFYI…IFVI, FLLC…LLQL, LFYV…FITI, VVII…QIDL, FLLT…GFFI, TLQS…YFVV, and ILPV…LYSV.

Belongs to the nematode receptor-like protein srd family.

It is found in the membrane. This Caenorhabditis elegans protein is Serpentine receptor class delta-48 (srd-48).